Reading from the N-terminus, the 382-residue chain is Alkanesulfonate monooxygenase (382 aa).

This sequence belongs to the SsuD family.

It catalyses the reaction an alkanesulfonate + FMNH2 + O2 = an aldehyde + FMN + sulfite + H2O + 2 H(+). Functionally, catalyzes the desulfonation of aliphatic sulfonates. This chain is Alkanesulfonate monooxygenase, found in Pseudomonas sp.